A 102-amino-acid chain; its full sequence is Urease subunit beta (102 aa).

It belongs to the urease beta subunit family. In terms of assembly, heterotrimer of UreA (gamma), UreB (beta) and UreC (alpha) subunits. Three heterotrimers associate to form the active enzyme.

The protein localises to the cytoplasm. It carries out the reaction urea + 2 H2O + H(+) = hydrogencarbonate + 2 NH4(+). It participates in nitrogen metabolism; urea degradation; CO(2) and NH(3) from urea (urease route): step 1/1. The polypeptide is Urease subunit beta (Methylibium petroleiphilum (strain ATCC BAA-1232 / LMG 22953 / PM1)).